The following is a 529-amino-acid chain: Ectonucleoside triphosphate diphosphohydrolase 3 (529 aa).

Residues 1 to 22 lie on the Cytoplasmic side of the membrane; it reads MFTVLTRQPCEQAGLKALYRTP. A helical membrane pass occupies residues 23–43; that stretch reads TIIALVVLLVSIVVLVSITVI. Topologically, residues 44–485 are extracellular; the sequence is QIHKQEVLPP…PLIRLPIEPP (442 aa). A glycan (N-linked (GlcNAc...) asparagine) is linked at Asn-81. Cysteines 92 and 116 form a disulfide. An N-linked (GlcNAc...) asparagine glycan is attached at Asn-149. Residue Glu-182 is the Proton acceptor of the active site. 222–226 contacts ATP; that stretch reads GASTQ. Residue Asn-238 is glycosylated (N-linked (GlcNAc...) asparagine). 3 disulfide bridges follow: Cys-261/Cys-308, Cys-289/Cys-334, and Cys-347/Cys-353. N-linked (GlcNAc...) asparagine glycosylation is found at Asn-381, Asn-392, Asn-402, and Asn-454. An intrachain disulfide couples Cys-399 to Cys-422. Residues 486–506 form a helical membrane-spanning segment; the sequence is VFVGTLAFFTAAALLCLAFLA. At 507-529 the chain is on the cytoplasmic side; it reads YLCSATRRKRHSEHAFDHAVDSD.

Belongs to the GDA1/CD39 NTPase family. Ca(2+) serves as cofactor. Requires Mg(2+) as cofactor. As to expression, expressed in adult brain, pancreas, spleen and prostate. Moderate or low expression is seen in most tissues. Not expressed in liver and peripheral blood leukocytes.

The protein resides in the cell membrane. It carries out the reaction a ribonucleoside 5'-triphosphate + 2 H2O = a ribonucleoside 5'-phosphate + 2 phosphate + 2 H(+). In terms of biological role, has a threefold preference for the hydrolysis of ATP over ADP. The polypeptide is Ectonucleoside triphosphate diphosphohydrolase 3 (ENTPD3) (Homo sapiens (Human)).